Here is a 175-residue protein sequence, read N- to C-terminus: NADH-quinone oxidoreductase subunit I (175 aa).

4Fe-4S ferredoxin-type domains follow at residues 69–98 and 115–144; these read KRDE…IEAA and KKFE…LDGT. [4Fe-4S] cluster is bound by residues Cys-78, Cys-81, Cys-84, Cys-88, Cys-124, Cys-127, Cys-130, and Cys-134.

Belongs to the complex I 23 kDa subunit family. In terms of assembly, NDH-1 is composed of 14 different subunits. Subunits NuoA, H, J, K, L, M, N constitute the membrane sector of the complex. The cofactor is [4Fe-4S] cluster.

It is found in the cell inner membrane. The enzyme catalyses a quinone + NADH + 5 H(+)(in) = a quinol + NAD(+) + 4 H(+)(out). In terms of biological role, NDH-1 shuttles electrons from NADH, via FMN and iron-sulfur (Fe-S) centers, to quinones in the respiratory chain. The immediate electron acceptor for the enzyme in this species is believed to be ubiquinone. Couples the redox reaction to proton translocation (for every two electrons transferred, four hydrogen ions are translocated across the cytoplasmic membrane), and thus conserves the redox energy in a proton gradient. The sequence is that of NADH-quinone oxidoreductase subunit I from Leptospira biflexa serovar Patoc (strain Patoc 1 / Ames).